Here is a 152-residue protein sequence, read N- to C-terminus: Superoxide dismutase [Cu-Zn] (152 aa).

Histidine 45, histidine 47, and histidine 62 together coordinate Cu cation. A disulfide bond links cysteine 56 and cysteine 145. Zn(2+) is bound by residues histidine 62, histidine 70, histidine 79, and aspartate 82. Histidine 119 serves as a coordination point for Cu cation.

This sequence belongs to the Cu-Zn superoxide dismutase family. As to quaternary structure, homodimer. Cu cation is required as a cofactor. Zn(2+) serves as cofactor.

The protein resides in the cytoplasm. It carries out the reaction 2 superoxide + 2 H(+) = H2O2 + O2. In terms of biological role, destroys radicals which are normally produced within the cells and which are toxic to biological systems. In Carica papaya (Papaya), this protein is Superoxide dismutase [Cu-Zn] (SODCC).